The sequence spans 241 residues: Uracil-DNA glycosylase (241 aa).

The active-site Proton acceptor is Asp-73.

The protein belongs to the uracil-DNA glycosylase (UDG) superfamily. UNG family.

The protein resides in the cytoplasm. It catalyses the reaction Hydrolyzes single-stranded DNA or mismatched double-stranded DNA and polynucleotides, releasing free uracil.. Excises uracil residues from the DNA which can arise as a result of misincorporation of dUMP residues by DNA polymerase or due to deamination of cytosine. In Agrobacterium fabrum (strain C58 / ATCC 33970) (Agrobacterium tumefaciens (strain C58)), this protein is Uracil-DNA glycosylase.